A 355-amino-acid polypeptide reads, in one-letter code: Trans-enoyl reductase (355 aa).

Position 45-48 (45-48 (VDTK)) interacts with NADP(+). 131–138 (ISFMTTGL) is a binding site for substrate. NADP(+) contacts are provided by residues 166–169 (SSAT), 189–192 (SPRN), Tyr207, and 254–255 (LE). 275–279 (GPQML) serves as a coordination point for substrate. 344-345 (IS) serves as a coordination point for NADP(+).

Belongs to the zinc-containing alcohol dehydrogenase family. As to quaternary structure, monomer.

The catalysed reaction is L-serine + 7 malonyl-CoA + acetyl-CoA + 2 S-adenosyl-L-methionine + ATP + 8 NADPH + 11 H(+) = (5S)-3-[(2E,6R,8E,10E,12E)-2,6-dimethyltetradeca-2,8,10,12-tetraenoyl]-5-(hydroxymethyl)pyrrolidine-2,4-dione + AMP + 2 S-adenosyl-L-homocysteine + 7 CO2 + diphosphate + 8 NADP(+) + 8 CoA + 6 H2O. It functions in the pathway mycotoxin biosynthesis. Its function is as follows. Hybrid PKS-NRPS synthetase; part of the gene cluster that mediates the biosynthesis of trichosetin, a trans-fused decalin-containing tetramic acid with antimicrobial activity. The PKS module of PKS-NRPS1 together with the enoylreductase (ER) catalyze the formation of the polyketide unit which is then conjugated to L-serine by the condensation domain of the PKS-NRPS1 NRPS module. Activity of the Dieckmann cyclase domain (RED) results in release of the Dieckmann product intermediate. Diels-Alderase (DA) is involved in endo-selective Diels-Alder cycloaddition to form the decalin ring, leading to the production of N-desmethylequisetin also called trichosetin. The cluster does not contain the equisetin N-methyltransferase and consequently, trichosetin is isolated as final product. The protein is Trans-enoyl reductase of Gibberella fujikuroi (strain CBS 195.34 / IMI 58289 / NRRL A-6831) (Bakanae and foot rot disease fungus).